The chain runs to 302 residues: Pantothenate synthetase 4 (302 aa).

51–58 (MGALHEGH) contributes to the ATP binding site. The Proton donor role is filled by His-58. Gln-82 is a binding site for (R)-pantoate. Gln-82 lines the beta-alanine pocket. 166 to 169 (GRKD) is a binding site for ATP. Position 172 (Gln-172) interacts with (R)-pantoate. ATP-binding positions include Ala-195 and 203-206 (RSSR).

This sequence belongs to the pantothenate synthetase family. As to quaternary structure, homodimer.

The protein resides in the cytoplasm. It carries out the reaction (R)-pantoate + beta-alanine + ATP = (R)-pantothenate + AMP + diphosphate + H(+). It participates in cofactor biosynthesis; (R)-pantothenate biosynthesis; (R)-pantothenate from (R)-pantoate and beta-alanine: step 1/1. Catalyzes the condensation of pantoate with beta-alanine in an ATP-dependent reaction via a pantoyl-adenylate intermediate. In Frankia alni (strain DSM 45986 / CECT 9034 / ACN14a), this protein is Pantothenate synthetase 4.